Reading from the N-terminus, the 118-residue chain is MTERTGYRATTKFLIASPTKVRPVANVVKNKPYPEAMAILENMPQKGAVLISQTMKSAASNALYKNKQLDEDMLFVKEIMIDEGPRLKRIWCRGKGRADILLKRMCHITVVVDERAGE.

This sequence belongs to the universal ribosomal protein uL22 family. As to quaternary structure, part of the 50S ribosomal subunit.

In terms of biological role, this protein binds specifically to 23S rRNA; its binding is stimulated by other ribosomal proteins, e.g. L4, L17, and L20. It is important during the early stages of 50S assembly. It makes multiple contacts with different domains of the 23S rRNA in the assembled 50S subunit and ribosome. Functionally, the globular domain of the protein is located near the polypeptide exit tunnel on the outside of the subunit, while an extended beta-hairpin is found that lines the wall of the exit tunnel in the center of the 70S ribosome. The polypeptide is Large ribosomal subunit protein uL22 (Treponema denticola (strain ATCC 35405 / DSM 14222 / CIP 103919 / JCM 8153 / KCTC 15104)).